Consider the following 380-residue polypeptide: Succinyl-diaminopimelate desuccinylase (380 aa).

Zn(2+) is bound at residue His-66. Asp-68 is a catalytic residue. Zn(2+) is bound at residue Asp-99. Glu-135 (proton acceptor) is an active-site residue. Positions 136, 164, and 350 each coordinate Zn(2+).

Belongs to the peptidase M20A family. DapE subfamily. In terms of assembly, homodimer. Zn(2+) serves as cofactor. It depends on Co(2+) as a cofactor.

It carries out the reaction N-succinyl-(2S,6S)-2,6-diaminopimelate + H2O = (2S,6S)-2,6-diaminopimelate + succinate. It participates in amino-acid biosynthesis; L-lysine biosynthesis via DAP pathway; LL-2,6-diaminopimelate from (S)-tetrahydrodipicolinate (succinylase route): step 3/3. In terms of biological role, catalyzes the hydrolysis of N-succinyl-L,L-diaminopimelic acid (SDAP), forming succinate and LL-2,6-diaminopimelate (DAP), an intermediate involved in the bacterial biosynthesis of lysine and meso-diaminopimelic acid, an essential component of bacterial cell walls. This Magnetococcus marinus (strain ATCC BAA-1437 / JCM 17883 / MC-1) protein is Succinyl-diaminopimelate desuccinylase.